The chain runs to 108 residues: Large ribosomal subunit protein bL21 (108 aa).

The protein belongs to the bacterial ribosomal protein bL21 family. In terms of assembly, part of the 50S ribosomal subunit. Contacts protein L20.

Its function is as follows. This protein binds to 23S rRNA in the presence of protein L20. This chain is Large ribosomal subunit protein bL21, found in Buchnera aphidicola subsp. Acyrthosiphon pisum (strain 5A).